Here is a 168-residue protein sequence, read N- to C-terminus: Large ribosomal subunit protein uL10 (168 aa).

This sequence belongs to the universal ribosomal protein uL10 family. In terms of assembly, part of the ribosomal stalk of the 50S ribosomal subunit. The N-terminus interacts with L11 and the large rRNA to form the base of the stalk. The C-terminus forms an elongated spine to which L12 dimers bind in a sequential fashion forming a multimeric L10(L12)X complex.

Functionally, forms part of the ribosomal stalk, playing a central role in the interaction of the ribosome with GTP-bound translation factors. This chain is Large ribosomal subunit protein uL10, found in Clostridioides difficile (strain 630) (Peptoclostridium difficile).